The primary structure comprises 272 residues: 3-keto-5-aminohexanoate cleavage enzyme (272 aa).

E15 provides a ligand contact to (5S)-5-amino-3-oxohexanoate. Positions 47 and 49 each coordinate Zn(2+). (5S)-5-amino-3-oxohexanoate-binding residues include S83, G86, and T107. Residue E226 coordinates Zn(2+).

The protein belongs to the BKACE family. Kce subfamily. In terms of assembly, homotetramer. Zn(2+) serves as cofactor.

It catalyses the reaction (5S)-5-amino-3-oxohexanoate + acetyl-CoA = (3S)-3-aminobutanoyl-CoA + acetoacetate. It participates in amino-acid degradation; L-lysine degradation via acetate pathway. 3-fold increase in activity by addition of 10 mM 2-mercaptoethanol. Addition of CoCl(2) and to a lesser extent MnCl(2) increases the activity but not MgCl(2). Inhibited by phosphate buffer but not by 5,5'-dithio-2-nitrobenzoic acid. Functionally, involved in the anaerobic fermentation of lysine. Catalyzes the reversible reaction between 3-keto-5-aminohexanoate (KAH) and acetyl-CoA to form 3-aminobutyryl-CoA and acetoacetate. The reaction involves the deprotonation of KAH, the nucleophilic addition onto acetyl-CoA and the intramolecular transfer of the CoA moiety. It can also use beta-alanyl-CoA as substrate. This is 3-keto-5-aminohexanoate cleavage enzyme from Fusobacterium nucleatum subsp. nucleatum (strain ATCC 25586 / DSM 15643 / BCRC 10681 / CIP 101130 / JCM 8532 / KCTC 2640 / LMG 13131 / VPI 4355).